A 464-amino-acid polypeptide reads, in one-letter code: Probable 3-ketoacyl-CoA synthase 21 (464 aa).

A helical membrane pass occupies residues 21-41; that stretch reads LLSSGVSVFEIFAGLLVVHLI. One can recognise an FAE domain in the interval 42–333; sequence YQRIRTRVKV…VIQHILCKKL (292 aa). Active-site residues include C187, H352, H356, H385, and N389.

The protein belongs to the thiolase-like superfamily. Chalcone/stilbene synthases family. Expressed in flowers.

Its subcellular location is the membrane. It carries out the reaction a very-long-chain acyl-CoA + malonyl-CoA + H(+) = a very-long-chain 3-oxoacyl-CoA + CO2 + CoA. Its pathway is lipid metabolism; fatty acid biosynthesis. The chain is Probable 3-ketoacyl-CoA synthase 21 from Arabidopsis thaliana (Mouse-ear cress).